Here is a 375-residue protein sequence, read N- to C-terminus: Chaperone protein DnaJ (375 aa).

The 66-residue stretch at 5 to 70 (DYYEILGISK…EKRAAYDQYG (66 aa)) folds into the J domain. The segment at 130-208 (GIIKEICIPT…CHGNGRVERS (79 aa)) adopts a CR-type zinc-finger fold. Residues Cys143, Cys146, Cys160, Cys163, Cys182, Cys185, Cys196, and Cys199 each contribute to the Zn(2+) site. CXXCXGXG motif repeat units lie at residues 143–150 (CEKCRGTG), 160–167 (CMTCHGQG), 182–189 (CPTCHGHG), and 196–203 (CNKCHGNG).

The protein belongs to the DnaJ family. As to quaternary structure, homodimer. Zn(2+) serves as cofactor.

The protein resides in the cytoplasm. Its function is as follows. Participates actively in the response to hyperosmotic and heat shock by preventing the aggregation of stress-denatured proteins and by disaggregating proteins, also in an autonomous, DnaK-independent fashion. Unfolded proteins bind initially to DnaJ; upon interaction with the DnaJ-bound protein, DnaK hydrolyzes its bound ATP, resulting in the formation of a stable complex. GrpE releases ADP from DnaK; ATP binding to DnaK triggers the release of the substrate protein, thus completing the reaction cycle. Several rounds of ATP-dependent interactions between DnaJ, DnaK and GrpE are required for fully efficient folding. Also involved, together with DnaK and GrpE, in the DNA replication of plasmids through activation of initiation proteins. The sequence is that of Chaperone protein DnaJ from Blochmanniella pennsylvanica (strain BPEN).